The primary structure comprises 1012 residues: Tolloid-like protein 2 (1012 aa).

The first 21 residues, 1 to 21 (MPLATTLGTLVLLLLLPLPRG), serve as a signal peptide directing secretion. The propeptide occupies 22–146 (AEVTGDHSNV…AKTFSARVRR (125 aa)). Residues 83-135 (KPSIDKPGHDTGGLEETSARWPNDTASNASIQAPRKDGKDATTFLPNPGTSNT) are disordered. Over residues 126 to 135 (FLPNPGTSNT) the composition is skewed to polar residues. The 201-residue stretch at 146–346 (RATTSRTERI…AQARKLYKCP (201 aa)) folds into the Peptidase M12A domain. N168 is a glycosylation site (N-linked (GlcNAc...) asparagine). 4 cysteine pairs are disulfide-bonded: C189–C345, C209–C231, C211–C212, and C348–C374. Residue H239 coordinates Zn(2+). Residue E240 is part of the active site. Positions 243 and 249 each coordinate Zn(2+). 2 consecutive CUB domains span residues 348–460 (CGET…YEAM) and 461–573 (CGGD…FFKE). N-linked (GlcNAc...) asparagine glycans are attached at residues N358 and N389. 12 disulfides stabilise this stretch: C401-C423, C461-C487, C514-C536, C577-C589, C585-C598, C600-C613, C617-C643, C670-C692, C733-C744, C740-C753, C755-C768, and C773-C799. Residues 573 to 614 (EVDECSWPDHGGCEQRCVNTLGSYTCACDPGYELAADKKTCE) enclose the EGF-like 1; calcium-binding domain. The 113-residue stretch at 617 to 729 (CGGFITKLNG…RGFRAHFFSD (113 aa)) folds into the CUB 3 domain. The N-linked (GlcNAc...) asparagine glycan is linked to N625. One can recognise an EGF-like 2; calcium-binding domain in the interval 729-769 (DKDECAKDNGGCQQECVNTFGSYLCRCRNGYRLHENGHDCK). 2 CUB domains span residues 773–885 (CAYK…HSTE) and 886–1002 (CGGR…YTST). The N-linked (GlcNAc...) asparagine glycan is linked to N802. Cystine bridges form between C826-C848, C886-C916, and C943-C965. R960 and R963 each carry omega-N-methylarginine.

Requires Zn(2+) as cofactor.

Its subcellular location is the secreted. Its function is as follows. Protease which specifically processes pro-lysyl oxidase. Required for the embryonic development. Predominant protease, which in the development, influences dorsal-ventral patterning and skeletogenesis. This Mus musculus (Mouse) protein is Tolloid-like protein 2 (Tll2).